We begin with the raw amino-acid sequence, 294 residues long: Acetylglutamate kinase (294 aa).

Substrate is bound by residues 67–68 (GG), Arg89, and Asn191.

Belongs to the acetylglutamate kinase family. ArgB subfamily.

Its subcellular location is the cytoplasm. The enzyme catalyses N-acetyl-L-glutamate + ATP = N-acetyl-L-glutamyl 5-phosphate + ADP. The protein operates within amino-acid biosynthesis; L-arginine biosynthesis; N(2)-acetyl-L-ornithine from L-glutamate: step 2/4. In terms of biological role, catalyzes the ATP-dependent phosphorylation of N-acetyl-L-glutamate. This chain is Acetylglutamate kinase, found in Methylobacillus flagellatus (strain ATCC 51484 / DSM 6875 / VKM B-1610 / KT).